The chain runs to 512 residues: Glutathione-binding protein GsiB (512 aa).

Residues 1–26 form the signal peptide; sequence MTQFITHKWLAALGLASSIAAFPALA.

This sequence belongs to the bacterial solute-binding protein 5 family. The complex is composed of two ATP-binding proteins (GsiA), two transmembrane proteins (GsiC and GsiD) and a solute-binding protein (GsiB).

It localises to the periplasm. Its function is as follows. Part of the ABC transporter complex GsiABCD involved in glutathione import. Binds glutathione. This chain is Glutathione-binding protein GsiB, found in Salmonella choleraesuis (strain SC-B67).